A 476-amino-acid chain; its full sequence is Neuropeptide receptor 18 (476 aa).

The Extracellular segment spans residues 1–61 (MSSFYNEAKF…LSNHDNSSLM (61 aa)). N-linked (GlcNAc...) asparagine glycans are attached at residues Asn43 and Asn57. Residues 62–82 (LIAGFYALLFMFGTCGNAAIL) traverse the membrane as a helical segment. Topologically, residues 83–102 (AVVHHVKGQDPRSRHNTTLT) are cytoplasmic. A helical membrane pass occupies residues 103–123 (YICILSIVDFLSMLPIPMTII). Topologically, residues 124–139 (DQILGFWMFDTFACKL) are extracellular. The cysteines at positions 137 and 228 are disulfide-linked. Residues 140–160 (FRLLEHIGKIFSTFILVAFSI) form a helical membrane-spanning segment. The Cytoplasmic portion of the chain corresponds to 161–179 (DRYCAVCHPLQVRVRNQRT). The helical transmembrane segment at 180-200 (VFVFLGIMFFVTCVMLSPILL) threads the bilayer. The Extracellular portion of the chain corresponds to 201 to 236 (YAHSKELVMHEKVDLDQEVITRMHLYKCVDDLGREL). A helical membrane pass occupies residues 237 to 257 (FVVFTLYSFVLAYLMPLLFMI). Residues 258–291 (YFYYEMLIRLFKQANVIKQTLVGRRSGGEEKKLT) lie on the Cytoplasmic side of the membrane. A helical membrane pass occupies residues 292 to 312 (IPVGHIAIYTLAICSFHFICW). Over 313 to 334 (TPYWISILYSLYEELYQDTKST) the chain is Extracellular. Residues 335 to 355 (ASPPTYAFIYFMYGVHALPYI) form a helical membrane-spanning segment. Topologically, residues 356 to 476 (NSASNFILYG…ITPDTESVIL (121 aa)) are cytoplasmic.

It belongs to the G-protein coupled receptor 1 family. As to expression, expressed in sensory neurons including ASER.

Its subcellular location is the cell membrane. Its function is as follows. Probable receptor for neuropeptide ligand nlp-9 that plays a role in octopamine signaling and specifically, the octapamine inhibition of aversion responses in olfactory sensory neurons. In AWB olfactory sensory neurons, required for the detection of preferred food sources. This chain is Neuropeptide receptor 18, found in Caenorhabditis elegans.